Reading from the N-terminus, the 85-residue chain is Large ribosomal subunit protein bL27 (85 aa).

The disordered stretch occupies residues 1–21; it reads MAHKKGGGTTRNGRDSESKRL.

This sequence belongs to the bacterial ribosomal protein bL27 family.

This Janthinobacterium sp. (strain Marseille) (Minibacterium massiliensis) protein is Large ribosomal subunit protein bL27.